The primary structure comprises 263 residues: Small ribosomal subunit protein uS15m (263 aa).

The transit peptide at Met-1–Lys-70 directs the protein to the mitochondrion. The segment covering Glu-238–Lys-251 has biased composition (basic and acidic residues). Positions Glu-238–Ala-263 are disordered.

Belongs to the universal ribosomal protein uS15 family. In terms of assembly, component of the mitochondrial ribosome small subunit (28S) which comprises a 12S rRNA and about 30 distinct proteins.

The protein resides in the mitochondrion. The protein is Small ribosomal subunit protein uS15m (mrps15) of Danio rerio (Zebrafish).